The primary structure comprises 388 residues: Succinate--CoA ligase [ADP-forming] subunit beta (388 aa).

Residues 9 to 244 (KSLFAEYGLP…PSQDDAREAH (236 aa)) enclose the ATP-grasp domain. ATP is bound by residues K46, 53–55 (GRG), E99, T102, and E107. 2 residues coordinate Mg(2+): N199 and D213. Residues N264 and 321-323 (GIV) contribute to the substrate site.

It belongs to the succinate/malate CoA ligase beta subunit family. Heterotetramer of two alpha and two beta subunits. It depends on Mg(2+) as a cofactor.

It carries out the reaction succinate + ATP + CoA = succinyl-CoA + ADP + phosphate. It catalyses the reaction GTP + succinate + CoA = succinyl-CoA + GDP + phosphate. Its pathway is carbohydrate metabolism; tricarboxylic acid cycle; succinate from succinyl-CoA (ligase route): step 1/1. In terms of biological role, succinyl-CoA synthetase functions in the citric acid cycle (TCA), coupling the hydrolysis of succinyl-CoA to the synthesis of either ATP or GTP and thus represents the only step of substrate-level phosphorylation in the TCA. The beta subunit provides nucleotide specificity of the enzyme and binds the substrate succinate, while the binding sites for coenzyme A and phosphate are found in the alpha subunit. In Shewanella frigidimarina (strain NCIMB 400), this protein is Succinate--CoA ligase [ADP-forming] subunit beta.